The sequence spans 699 residues: MSKINKLEHIRNIGICAHIDAGKTTTTERILYYTGKSHKIGEVHEGGATMDWMEQEQERGITITSAATTCRWQDKIINIIDTPGHVDFTIEVERSLRVLDGAVAVFDGVAGVEPQSETVWRQADKYNVPRMCFVNKMDRMGADFYRCVEMLKDRLGAKPLVIQLPVGIEENFKGIIDLIKMKAVIWKDEALGAEYFEEDIPADMKDKAEEYRAKLLDMVVELDDHVMEKYLSGEEVTAEEIKRLIRKGTISAAFYPVLCGSAFKNKGVQPLLDAVVDFLPSPIDIGIVKGMEVSTGAEKDFPISVTEPFAALAFKIMNDPFVGSLTFIRIYSGKITSGTTVINTVKNKREKIGRMLLMHANNREDVKEASAGDIVALAGLKDTTTGDTLSDIDQQVILERMEFPEPVIELAVEPKSTADQEKMGLALSRLAAEDPSFRVSTDYETGQTVIKGMGELHLEIIIDRMRREFKVEANIGAPQVAYRETITKVCEIDYTHKKQSGGAGQFARVKIIFEPLKEVKDLKDEDKNKNFVFESKIIGGAVPKEYIPGVEKGLNNIRETGVIAGYPMIDFKATLVDGAFHDVDSSVLAFEIAAKAAFREGMPKGNPKLLEPIMQVEVITPDEYMGDIIGDLNSRRGQIQSMDPRGNAQVVTANVPLAEMFGYVNTLRSLSQGRAQFSMIFSHYDQVPSQVADIIKAKK.

Residues 8-283 (EHIRNIGICA…AVVDFLPSPI (276 aa)) form the tr-type G domain. GTP contacts are provided by residues 17 to 24 (AHIDAGKT), 81 to 85 (DTPGH), and 135 to 138 (NKMD).

This sequence belongs to the TRAFAC class translation factor GTPase superfamily. Classic translation factor GTPase family. EF-G/EF-2 subfamily.

It localises to the cytoplasm. Functionally, catalyzes the GTP-dependent ribosomal translocation step during translation elongation. During this step, the ribosome changes from the pre-translocational (PRE) to the post-translocational (POST) state as the newly formed A-site-bound peptidyl-tRNA and P-site-bound deacylated tRNA move to the P and E sites, respectively. Catalyzes the coordinated movement of the two tRNA molecules, the mRNA and conformational changes in the ribosome. This Rickettsia sibirica (strain ATCC VR-151 / 246) protein is Elongation factor G.